The sequence spans 163 residues: MSNPQPDDSNNRIVAVTLDEESIGRSGPDIEHERAIAIYDLVEKNLFAPEGAGEGPFTLHIGITGSRLMFDIRREDGTPVVAHLLSLSPFRRIVKDYFMICDSYYQAIRTATPDKIEAIDMGRRGIHDEGSRTLQERLAGKVRIDFETARRLFTLISVLHWKG.

This sequence belongs to the UPF0262 family.

The polypeptide is UPF0262 protein RPB_4349 (Rhodopseudomonas palustris (strain HaA2)).